We begin with the raw amino-acid sequence, 177 residues long: Large ribosomal subunit protein uL6 (177 aa).

Belongs to the universal ribosomal protein uL6 family. Part of the 50S ribosomal subunit.

Functionally, this protein binds to the 23S rRNA, and is important in its secondary structure. It is located near the subunit interface in the base of the L7/L12 stalk, and near the tRNA binding site of the peptidyltransferase center. The chain is Large ribosomal subunit protein uL6 from Methanococcoides burtonii (strain DSM 6242 / NBRC 107633 / OCM 468 / ACE-M).